A 175-amino-acid chain; its full sequence is Large ribosomal subunit protein uL10 (175 aa).

Belongs to the universal ribosomal protein uL10 family. Part of the ribosomal stalk of the 50S ribosomal subunit. The N-terminus interacts with L11 and the large rRNA to form the base of the stalk. The C-terminus forms an elongated spine to which L12 dimers bind in a sequential fashion forming a multimeric L10(L12)X complex.

In terms of biological role, forms part of the ribosomal stalk, playing a central role in the interaction of the ribosome with GTP-bound translation factors. This Picosynechococcus sp. (strain ATCC 27264 / PCC 7002 / PR-6) (Agmenellum quadruplicatum) protein is Large ribosomal subunit protein uL10.